We begin with the raw amino-acid sequence, 271 residues long: Structure-specific endonuclease subunit SLX1 (271 aa).

A GIY-YIG domain is found at 9-94; that stretch reads RFFGVYLLYC…PQASRRLTHV (86 aa). The SLX1-type zinc-finger motif lies at 182–234; it reads CTLCARMLQDEEGPLCCPHPGCPLRAHIICLAEEFLQEEPGQLLPLEGHCPSC.

This sequence belongs to the SLX1 family. As to quaternary structure, forms a heterodimer with SLX4. A divalent metal cation is required as a cofactor.

The protein resides in the nucleus. Its function is as follows. Catalytic subunit of the SLX1-SLX4 structure-specific endonuclease that resolves DNA secondary structures generated during DNA repair and recombination. Has endonuclease activity towards branched DNA substrates, introducing single-strand cuts in duplex DNA close to junctions with ss-DNA. Has a preference for 5'-flap structures, and promotes symmetrical cleavage of static and migrating Holliday junctions (HJs). Resolves HJs by generating two pairs of ligatable, nicked duplex products. The polypeptide is Structure-specific endonuclease subunit SLX1 (Slx1b) (Rattus norvegicus (Rat)).